Here is a 315-residue protein sequence, read N- to C-terminus: Ribose-phosphate pyrophosphokinase (315 aa).

ATP-binding positions include Asp-37–Glu-39 and Arg-96–Gln-97. His-131 and Asp-170 together coordinate Mg(2+). Lys-194 is a catalytic residue. D-ribose 5-phosphate contacts are provided by residues Arg-196, Asp-220, and Asp-224–Thr-228.

This sequence belongs to the ribose-phosphate pyrophosphokinase family. Class I subfamily. Homohexamer. Mg(2+) is required as a cofactor.

Its subcellular location is the cytoplasm. It carries out the reaction D-ribose 5-phosphate + ATP = 5-phospho-alpha-D-ribose 1-diphosphate + AMP + H(+). It participates in metabolic intermediate biosynthesis; 5-phospho-alpha-D-ribose 1-diphosphate biosynthesis; 5-phospho-alpha-D-ribose 1-diphosphate from D-ribose 5-phosphate (route I): step 1/1. In terms of biological role, involved in the biosynthesis of the central metabolite phospho-alpha-D-ribosyl-1-pyrophosphate (PRPP) via the transfer of pyrophosphoryl group from ATP to 1-hydroxyl of ribose-5-phosphate (Rib-5-P). The protein is Ribose-phosphate pyrophosphokinase of Photorhabdus laumondii subsp. laumondii (strain DSM 15139 / CIP 105565 / TT01) (Photorhabdus luminescens subsp. laumondii).